The following is a 356-amino-acid chain: Aromatic dipeptide epimerase (356 aa).

Substrate contacts are provided by residues Thr-136 and Lys-161 to Lys-163. Asp-191, Glu-219, and Asp-244 together coordinate Mg(2+). Substrate is bound by residues Lys-268 and Asp-320 to Asp-322.

The protein belongs to the mandelate racemase/muconate lactonizing enzyme family. Mg(2+) serves as cofactor.

Has epimerase activity with a variety of hydrophobic dipeptides (in vitro). Enzyme activity is highest with L-Phe-L-Tyr, but is still relatively low, suggesting that L-Phe-L-Tyr is not the physiological substrate. This Herpetosiphon aurantiacus (strain ATCC 23779 / DSM 785 / 114-95) protein is Aromatic dipeptide epimerase.